The following is a 404-amino-acid chain: Probable tRNA sulfurtransferase (404 aa).

The THUMP domain occupies 61–166 (EAVSERLKDV…SGYSYIMCDE (106 aa)). ATP contacts are provided by residues 184–185 (LL), 209–210 (HF), arginine 266, glycine 288, and glutamine 297.

It belongs to the ThiI family.

It is found in the cytoplasm. It catalyses the reaction [ThiI sulfur-carrier protein]-S-sulfanyl-L-cysteine + a uridine in tRNA + 2 reduced [2Fe-2S]-[ferredoxin] + ATP + H(+) = [ThiI sulfur-carrier protein]-L-cysteine + a 4-thiouridine in tRNA + 2 oxidized [2Fe-2S]-[ferredoxin] + AMP + diphosphate. It carries out the reaction [ThiS sulfur-carrier protein]-C-terminal Gly-Gly-AMP + S-sulfanyl-L-cysteinyl-[cysteine desulfurase] + AH2 = [ThiS sulfur-carrier protein]-C-terminal-Gly-aminoethanethioate + L-cysteinyl-[cysteine desulfurase] + A + AMP + 2 H(+). Its pathway is cofactor biosynthesis; thiamine diphosphate biosynthesis. In terms of biological role, catalyzes the ATP-dependent transfer of a sulfur to tRNA to produce 4-thiouridine in position 8 of tRNAs, which functions as a near-UV photosensor. Also catalyzes the transfer of sulfur to the sulfur carrier protein ThiS, forming ThiS-thiocarboxylate. This is a step in the synthesis of thiazole, in the thiamine biosynthesis pathway. The sulfur is donated as persulfide by IscS. The chain is Probable tRNA sulfurtransferase from Bacillus cereus (strain AH820).